We begin with the raw amino-acid sequence, 502 residues long: Glycogen synthase 1 (502 aa).

Lys-18 contributes to the ADP-alpha-D-glucose binding site.

This sequence belongs to the glycosyltransferase 1 family. Bacterial/plant glycogen synthase subfamily.

The catalysed reaction is [(1-&gt;4)-alpha-D-glucosyl](n) + ADP-alpha-D-glucose = [(1-&gt;4)-alpha-D-glucosyl](n+1) + ADP + H(+). The protein operates within glycan biosynthesis; glycogen biosynthesis. Functionally, synthesizes alpha-1,4-glucan chains using ADP-glucose. This chain is Glycogen synthase 1, found in Geobacter metallireducens (strain ATCC 53774 / DSM 7210 / GS-15).